The chain runs to 1551 residues: Pentafunctional AROM polypeptide (1551 aa).

A 3-dehydroquinate synthase region spans residues 1–379 (MSIEKVPILG…YQLKAHEVSK (379 aa)). NAD(+) contacts are provided by residues 42–44 (DTN), 80–83 (ENNK), 111–113 (GGV), and Asp116. Position 127 (Arg127) interacts with 7-phospho-2-dehydro-3-deoxy-D-arabino-heptonate. 136 to 137 (TT) serves as a coordination point for NAD(+). Residues Asp143 and Lys149 each coordinate 7-phospho-2-dehydro-3-deoxy-D-arabino-heptonate. Lys158 provides a ligand contact to NAD(+). Residue Asn159 coordinates 7-phospho-2-dehydro-3-deoxy-D-arabino-heptonate. NAD(+) contacts are provided by residues 176–179 (YLES) and Asn187. Glu191 is a binding site for Zn(2+). 7-phospho-2-dehydro-3-deoxy-D-arabino-heptonate contacts are provided by residues 191–194 (EVVK) and Lys243. Glu253 functions as the Proton acceptor; for 3-dehydroquinate synthase activity in the catalytic mechanism. 7-phospho-2-dehydro-3-deoxy-D-arabino-heptonate-binding positions include 257 to 261 (RNLLN) and His264. His264 contacts Zn(2+). The active-site Proton acceptor; for 3-dehydroquinate synthase activity is His268. The 7-phospho-2-dehydro-3-deoxy-D-arabino-heptonate site is built by His280 and Lys351. Residue His280 participates in Zn(2+) binding. The tract at residues 392–838 (VHPFKQPPQE…WDILHSKFNI (447 aa)) is EPSP synthase. Positions 858–1048 (DKSIIIIGMR…IPSGRSAALS (191 aa)) are shikimate kinase. 865-872 (GMRGTGKS) is an ATP binding site. A 3-dehydroquinase region spans residues 1049-1258 (LTVPDLNAIS…NEDGLLTIKE (210 aa)). Lys1194 functions as the Schiff-base intermediate with substrate; for 3-dehydroquinate dehydratase activity in the catalytic mechanism. Residues 1271-1551 (AKKFWVIGSP…DVIHRAVVEE (281 aa)) form a shikimate dehydrogenase region.

The protein in the N-terminal section; belongs to the sugar phosphate cyclases superfamily. Dehydroquinate synthase family. It in the 2nd section; belongs to the EPSP synthase family. In the 3rd section; belongs to the shikimate kinase family. This sequence in the 4th section; belongs to the type-I 3-dehydroquinase family. The protein in the C-terminal section; belongs to the shikimate dehydrogenase family. As to quaternary structure, homodimer. The cofactor is Zn(2+).

It is found in the cytoplasm. It catalyses the reaction 7-phospho-2-dehydro-3-deoxy-D-arabino-heptonate = 3-dehydroquinate + phosphate. The enzyme catalyses 3-dehydroquinate = 3-dehydroshikimate + H2O. It carries out the reaction shikimate + NADP(+) = 3-dehydroshikimate + NADPH + H(+). The catalysed reaction is shikimate + ATP = 3-phosphoshikimate + ADP + H(+). It catalyses the reaction 3-phosphoshikimate + phosphoenolpyruvate = 5-O-(1-carboxyvinyl)-3-phosphoshikimate + phosphate. Its pathway is metabolic intermediate biosynthesis; chorismate biosynthesis; chorismate from D-erythrose 4-phosphate and phosphoenolpyruvate: step 2/7. It functions in the pathway metabolic intermediate biosynthesis; chorismate biosynthesis; chorismate from D-erythrose 4-phosphate and phosphoenolpyruvate: step 3/7. The protein operates within metabolic intermediate biosynthesis; chorismate biosynthesis; chorismate from D-erythrose 4-phosphate and phosphoenolpyruvate: step 4/7. It participates in metabolic intermediate biosynthesis; chorismate biosynthesis; chorismate from D-erythrose 4-phosphate and phosphoenolpyruvate: step 5/7. Its pathway is metabolic intermediate biosynthesis; chorismate biosynthesis; chorismate from D-erythrose 4-phosphate and phosphoenolpyruvate: step 6/7. Its function is as follows. The AROM polypeptide catalyzes 5 consecutive enzymatic reactions in prechorismate polyaromatic amino acid biosynthesis. This is Pentafunctional AROM polypeptide from Candida tropicalis (strain ATCC MYA-3404 / T1) (Yeast).